We begin with the raw amino-acid sequence, 213 residues long: MSSDVTLAQPGRDAFLASSLEVAPRLLGAVLRHESAEGPVALRITEVEAYTGEGLDPGSHAFRGPTRRNAAMYGEPGRLYAYFTYGMHVCANVVCSPAGEASAVLLRGAEIVEGLALAERRRAGASGRRIPQRDLARGPARLVVAAGIGLADDGADLLAPPFGLLLPSVQPEYATGPRTGVSGAGGGAAFPWRYWLPGEPSVSPYKRHPASHG.

Belongs to the DNA glycosylase MPG family.

In Leifsonia xyli subsp. xyli (strain CTCB07), this protein is Putative 3-methyladenine DNA glycosylase.